An 864-amino-acid chain; its full sequence is Probable M1 family aminopeptidase 2 (864 aa).

Substrate-binding positions include glutamate 149 and glycine 289–asparagine 293. Histidine 325 serves as a coordination point for Zn(2+). Glutamate 326 serves as the catalytic Proton acceptor. Zn(2+)-binding residues include histidine 329 and glutamate 348.

Belongs to the peptidase M1 family. It depends on Zn(2+) as a cofactor.

The chain is Probable M1 family aminopeptidase 2 from Encephalitozoon cuniculi (strain GB-M1) (Microsporidian parasite).